Consider the following 851-residue polypeptide: Beta-galactosidase BoGH2A (851 aa).

The signal sequence occupies residues 1-19 (MMIGKLKYLMLGGCLILGS). Residue cysteine 20 is the site of N-palmitoyl cysteine attachment. A lipid anchor (S-diacylglycerol cysteine) is attached at cysteine 20. Glutamate 437 (proton donor) is an active-site residue. Catalysis depends on glutamate 544, which acts as the Nucleophile.

This sequence belongs to the glycosyl hydrolase 2 family.

The protein localises to the cell inner membrane. The catalysed reaction is Hydrolysis of terminal non-reducing beta-D-galactose residues in beta-D-galactosides.. It participates in glucan metabolism; xyloglucan degradation. Its function is as follows. Catalyzes the hydrolysis of terminal non-reducing beta-D-galactose residues in beta-D-galactosides in xyloglucan degradation, converting 'L' units to 'X' units. This is Beta-galactosidase BoGH2A from Bacteroides ovatus (strain ATCC 8483 / DSM 1896 / JCM 5824 / BCRC 10623 / CCUG 4943 / NCTC 11153).